Here is a 169-residue protein sequence, read N- to C-terminus: Peptide deformylase (169 aa).

Residues Cys94 and His136 each contribute to the Fe cation site. Glu137 is a catalytic residue. Residue His140 coordinates Fe cation.

Belongs to the polypeptide deformylase family. Fe(2+) serves as cofactor.

It carries out the reaction N-terminal N-formyl-L-methionyl-[peptide] + H2O = N-terminal L-methionyl-[peptide] + formate. Removes the formyl group from the N-terminal Met of newly synthesized proteins. Requires at least a dipeptide for an efficient rate of reaction. N-terminal L-methionine is a prerequisite for activity but the enzyme has broad specificity at other positions. This Phenylobacterium zucineum (strain HLK1) protein is Peptide deformylase.